Here is a 585-residue protein sequence, read N- to C-terminus: 2-succinyl-5-enolpyruvyl-6-hydroxy-3-cyclohexene-1-carboxylate synthase (585 aa).

The protein belongs to the TPP enzyme family. MenD subfamily. As to quaternary structure, homodimer. Requires Mg(2+) as cofactor. It depends on Mn(2+) as a cofactor. Thiamine diphosphate is required as a cofactor.

It carries out the reaction isochorismate + 2-oxoglutarate + H(+) = 5-enolpyruvoyl-6-hydroxy-2-succinyl-cyclohex-3-ene-1-carboxylate + CO2. It functions in the pathway quinol/quinone metabolism; 1,4-dihydroxy-2-naphthoate biosynthesis; 1,4-dihydroxy-2-naphthoate from chorismate: step 2/7. Its pathway is cofactor biosynthesis; phylloquinone biosynthesis. In terms of biological role, catalyzes the thiamine diphosphate-dependent decarboxylation of 2-oxoglutarate and the subsequent addition of the resulting succinic semialdehyde-thiamine pyrophosphate anion to isochorismate to yield 2-succinyl-5-enolpyruvyl-6-hydroxy-3-cyclohexene-1-carboxylate (SEPHCHC). This chain is 2-succinyl-5-enolpyruvyl-6-hydroxy-3-cyclohexene-1-carboxylate synthase, found in Crocosphaera subtropica (strain ATCC 51142 / BH68) (Cyanothece sp. (strain ATCC 51142)).